The following is a 393-amino-acid chain: S-adenosylmethionine synthase 2 (393 aa).

Glu-9 lines the Mg(2+) pocket. His-15 contacts ATP. Position 43 (Glu-43) interacts with K(+). L-methionine-binding residues include Glu-56 and Gln-99. ATP-binding positions include 167-169 (DGK), 235-238 (SGRF), Asp-246, 252-253 (RK), Ala-269, Lys-273, and Lys-277. Asp-246 lines the L-methionine pocket. Lys-277 provides a ligand contact to L-methionine.

This sequence belongs to the AdoMet synthase family. As to quaternary structure, homotetramer. Interacts with GRF3. Requires Mn(2+) as cofactor. The cofactor is Mg(2+). Co(2+) serves as cofactor. K(+) is required as a cofactor. In terms of tissue distribution, highly expressed in stems and roots. Detected in trichomes (at the protein level).

Its subcellular location is the cytoplasm. It carries out the reaction L-methionine + ATP + H2O = S-adenosyl-L-methionine + phosphate + diphosphate. It participates in amino-acid biosynthesis; S-adenosyl-L-methionine biosynthesis; S-adenosyl-L-methionine from L-methionine: step 1/1. Its activity is regulated as follows. Inhibited by 5,5'-dithiobis-2-nitrobenzoic acid (DTNB) and N-ethylmaleimide (NEM) (in vitro). Its function is as follows. Catalyzes the formation of S-adenosylmethionine from methionine and ATP. The reaction comprises two steps that are both catalyzed by the same enzyme: formation of S-adenosylmethionine (AdoMet) and triphosphate, and subsequent hydrolysis of the triphosphate. In Arabidopsis thaliana (Mouse-ear cress), this protein is S-adenosylmethionine synthase 2 (SAM2).